Consider the following 330-residue polypeptide: Peroxidase 42 (330 aa).

An N-terminal signal peptide occupies residues 1–23 (MGGKGVMMVAILCLWALSATSEA). 4 disulfide bridges follow: Cys-40-Cys-119, Cys-73-Cys-78, Cys-125-Cys-323, and Cys-204-Cys-231. Residue His-71 is the Proton acceptor of the active site. The Ca(2+) site is built by Asp-72, Val-75, Asp-79, and Ser-81. Pro-167 contacts substrate. A glycan (N-linked (GlcNAc...) asparagine) is linked at Asn-170. His-197 serves as a coordination point for heme b. Ser-198 contacts Ca(2+). Ca(2+) contacts are provided by Asp-247, Thr-250, and Asp-255.

This sequence belongs to the peroxidase family. Classical plant (class III) peroxidase subfamily. Heme b serves as cofactor. Ca(2+) is required as a cofactor. Constitutively expressed in the whole plant, with the highest expression in roots.

It is found in the secreted. It carries out the reaction 2 a phenolic donor + H2O2 = 2 a phenolic radical donor + 2 H2O. Functionally, removal of H(2)O(2), oxidation of toxic reductants, biosynthesis and degradation of lignin, suberization, auxin catabolism, response to environmental stresses such as wounding, pathogen attack and oxidative stress. These functions might be dependent on each isozyme/isoform in each plant tissue. In terms of biological role, might function as heat shock-like defense protein. The sequence is that of Peroxidase 42 (PER42) from Arabidopsis thaliana (Mouse-ear cress).